The chain runs to 512 residues: Protein arginine N-methyltransferase 2 (512 aa).

Positions 67-103 (TSNIDDLPLPPPIQEVEEEEPTQQNIEQQQQTQDESD) are disordered. The segment covering 88–99 (TQQNIEQQQQTQ) has biased composition (low complexity). Residues 120–508 (DEEYFSSYSK…KTNPFDYSYQ (389 aa)) enclose the SAM-dependent MTase PRMT-type domain. S-adenosyl-L-methionine-binding residues include H133, R142, G166, and E217. Residues E231 and E240 contribute to the active site. Residues 375–395 (DDDDNDNNNNNNDNSNDDENK) form a disordered region.

The protein belongs to the class I-like SAM-binding methyltransferase superfamily. Protein arginine N-methyltransferase family.

The protein resides in the cytoplasm. It is found in the nucleus. The catalysed reaction is L-arginyl-[protein] + 2 S-adenosyl-L-methionine = N(omega),N(omega)-dimethyl-L-arginyl-[protein] + 2 S-adenosyl-L-homocysteine + 2 H(+). Functionally, arginine methyltransferase that methylates the guanidino nitrogens of arginyl residues in some proteins such as histones. The chain is Protein arginine N-methyltransferase 2 (prmt2) from Dictyostelium discoideum (Social amoeba).